We begin with the raw amino-acid sequence, 455 residues long: Chromosomal replication initiator protein DnaA (455 aa).

Positions 1-74 (MSEQEIWEKV…LYEAIGHEIA (74 aa)) are domain I, interacts with DnaA modulators. The interval 74-116 (APVFYTEEELKSLHTSEQKEENQPEQPAKKYTPGVDEAVIGGE) is domain II. A compositionally biased stretch (basic and acidic residues) spans 85–95 (SLHTSEQKEEN). Positions 85–104 (SLHTSEQKEENQPEQPAKKY) are disordered. The domain III, AAA+ region stretch occupies residues 117–333 (QFNTHNTFET…GALTRVLAFS (217 aa)). Residues G161, G163, K164, and T165 each coordinate ATP. The tract at residues 334–455 (KLQGQPITTE…ENLEKEIRNQ (122 aa)) is domain IV, binds dsDNA.

This sequence belongs to the DnaA family. In terms of assembly, oligomerizes as a right-handed, spiral filament on DNA at oriC.

The protein resides in the cytoplasm. Plays an essential role in the initiation and regulation of chromosomal replication. ATP-DnaA binds to the origin of replication (oriC) to initiate formation of the DNA replication initiation complex once per cell cycle. Binds the DnaA box (a 9 base pair repeat at the origin) and separates the double-stranded (ds)DNA. Forms a right-handed helical filament on oriC DNA; dsDNA binds to the exterior of the filament while single-stranded (ss)DNA is stabiized in the filament's interior. The ATP-DnaA-oriC complex binds and stabilizes one strand of the AT-rich DNA unwinding element (DUE), permitting loading of DNA polymerase. After initiation quickly degrades to an ADP-DnaA complex that is not apt for DNA replication. Binds acidic phospholipids. This is Chromosomal replication initiator protein DnaA from Staphylococcus saprophyticus subsp. saprophyticus (strain ATCC 15305 / DSM 20229 / NCIMB 8711 / NCTC 7292 / S-41).